An 81-amino-acid polypeptide reads, in one-letter code: Cytochrome b559 subunit alpha (81 aa).

The helical transmembrane segment at 21-35 (VIHSITIPMLFVAGW) threads the bilayer. Heme is bound at residue H23.

The protein belongs to the PsbE/PsbF family. Heterodimer of an alpha subunit and a beta subunit. PSII is composed of 1 copy each of membrane proteins PsbA, PsbB, PsbC, PsbD, PsbE, PsbF, PsbH, PsbI, PsbJ, PsbK, PsbL, PsbM, PsbT, PsbX, PsbY, PsbZ, Psb30/Ycf12, peripheral proteins PsbO, CyanoQ (PsbQ), PsbU, PsbV and a large number of cofactors. It forms dimeric complexes. The cofactor is heme b.

The protein localises to the cellular thylakoid membrane. This b-type cytochrome is tightly associated with the reaction center of photosystem II (PSII). PSII is a light-driven water:plastoquinone oxidoreductase that uses light energy to abstract electrons from H(2)O, generating O(2) and a proton gradient subsequently used for ATP formation. It consists of a core antenna complex that captures photons, and an electron transfer chain that converts photonic excitation into a charge separation. The chain is Cytochrome b559 subunit alpha from Gloeothece citriformis (strain PCC 7424) (Cyanothece sp. (strain PCC 7424)).